We begin with the raw amino-acid sequence, 452 residues long: Ribosome biogenesis protein YTM1 (452 aa).

The tract at residues 17–98 (IVSQPVVFTT…EETLEIEYIE (82 aa)) is ubiquitin-like (UBL) domain. 3 WD repeats span residues 110 to 148 (PHEDWVSSVSCQLPRYFLTASYDGNLRAFDLSKNLTASI), 150 to 195 (AHPA…NPMA), and 208 to 247 (LHTAPVSSISANAAGTHVLTASWDGLIGYWDATVPSTDEV). Residues 245-269 (DEVPEPALNERDRSKKRRRVEEGEV) are disordered. Basic and acidic residues predominate over residues 252-269 (LNERDRSKKRRRVEEGEV). 4 WD repeats span residues 282-322 (SHTA…CSHT), 325-364 (ASEKPFLDMALTPDGNSALATSTDRSMTLYDLRSSTTILT), 371-411 (MHPS…SAMA), and 418-452 (GSGQKVLSVDWKRGIVGVGGERGLEMWKVGEEQKV).

It belongs to the WD repeat WDR12/YTM1 family. As to quaternary structure, component of the NOP7 complex, composed of ERB1, NOP7 and YTM1. The complex is held together by ERB1, which interacts with NOP7 via its N-terminal domain and with YTM1 via a high-affinity interaction between the seven-bladed beta-propeller domains of the 2 proteins. The NOP7 complex associates with the 66S pre-ribosome. Interacts (via UBL domain) with MDN1 (via VWFA/MIDAS domain).

Its subcellular location is the nucleus. It is found in the nucleolus. The protein localises to the nucleoplasm. Its function is as follows. Component of the NOP7 complex, which is required for maturation of the 25S and 5.8S ribosomal RNAs and formation of the 60S ribosome. The sequence is that of Ribosome biogenesis protein YTM1 from Laccaria bicolor (strain S238N-H82 / ATCC MYA-4686) (Bicoloured deceiver).